A 95-amino-acid chain; its full sequence is Antitoxin TacA1 (95 aa).

Positions 59 to 95 (FNFNDEQYEEFINLLDAPVADDPVIEKLLARKPQWDV) are neutralization domain.

It belongs to the TacA antitoxin family. As to quaternary structure, homodimer. Forms a complex with cognate toxin TacT1. Forms a 4:2 antitoxin:toxin complex with cognate toxin TacT1.

Functionally, antitoxin component of a type II toxin-antitoxin (TA) system. Counteracts the toxic effect of cognate toxin TacT1 (T8), but not TacT2 or TacT3. Plays a role in persister cell formation. In terms of biological role, the TacA1-TacT1 complex binds (and probably represses) its own promoter DNA but not that of tacA3-tacT3, it does not repress the tacA3-tacT3 promoter. The sequence is that of Antitoxin TacA1 from Salmonella typhimurium (strain 14028s / SGSC 2262).